We begin with the raw amino-acid sequence, 1545 residues long: Dual oxidase 2 (1545 aa).

The first 25 residues, 1 to 25, serve as a signal peptide directing secretion; sequence MLCIRPEALVLLGALLTVPLDPVGG. At 26–601 the chain is on the extracellular side; that stretch reads QDALSLTWEV…EGSGPGFGIT (576 aa). The interval 30–596 is peroxidase-like; mediates peroxidase activity; it reads SLTWEVQRYD…VIQYFEGSGP (567 aa). Residues Asn-100, Asn-312, Asn-348, Asn-358, Asn-455, and Asn-549 are each glycosylated (N-linked (GlcNAc...) asparagine). A disulfide bridge links Cys-124 with Cys-1159. A helical transmembrane segment spans residues 602–622; it reads IVALCCLPLMSLLISGVVAYF. At 623 to 1037 the chain is on the cytoplasmic side; it reads RSRERKKLQK…YKRFVENYRR (415 aa). EF-hand domains follow at residues 819–854, 855–890, and 899–934; these read PQDMFVESMFSLADKDGNGYLSFREFLDVLVVFMKG, SPEDKSRLMFTMYDLDGNGFLSKDEFFTMIRSFIEI, and QLTEVVESMFREAGFQDKQELTWEDFHFMLRDHDSE. The Ca(2+) site is built by Asp-832, Asp-834, Asn-836, Tyr-838, Glu-843, Asp-868, Asp-870, Asn-872, and Glu-879. Residues 960–1242 are interaction with TXNDC11; that stretch reads RVSFIIRTPE…GSFALIQLPR (283 aa). A helical transmembrane segment spans residues 1038-1058; that stretch reads HIVCVAIFSAICAGLFVERAY. Topologically, residues 1059-1074 are extracellular; the sequence is YYAFVSPPSGIAETTF. Residues 1075 to 1097 form a helical membrane-spanning segment; that stretch reads VGIILSRGTAASVSFMFSYILLT. The region spanning 1081–1263 is the Ferric oxidoreductase domain; the sequence is RGTAASVSFM…YVGDKLVSLS (183 aa). The Cytoplasmic portion of the chain corresponds to 1098–1125; it reads MCRNLITFLRETFLNHYVPFDAAVDFHR. A helical membrane pass occupies residues 1126–1148; it reads WIAMAALVLAILHSVGHVVNVYI. At 1149–1182 the chain is on the extracellular side; sequence FSVSPLSLLACVFPSVFVNDGSKLPQKFYWWFFQ. The chain crosses the membrane as a helical span at residues 1183-1203; that stretch reads TIPGMTGVLLLVVLAIMYVFA. The Cytoplasmic segment spans residues 1204–1220; the sequence is SPYFRRRSFRGFWLTHH. A helical membrane pass occupies residues 1221 to 1241; that stretch reads FYILLYVLLIIHGSFALIQLP. A topological domain (extracellular) is located at residue Arg-1242. A helical membrane pass occupies residues 1243–1263; it reads FHIFFLVPALIYVGDKLVSLS. The FAD-binding FR-type domain occupies 1264 to 1370; that stretch reads RKKVEISVVK…DGPFGEGHQE (107 aa). Residues 1264-1545 are Cytoplasmic-facing; that stretch reads RKKVEISVVK…THFVHHYENF (282 aa).

In the N-terminal section; belongs to the peroxidase family. In terms of assembly, heterodimer with DUOXA2; disulfide-linked. Interacts with TXNDC11, TPO and CYBA. Post-translationally, N-glycosylated. Expressed in thyroid, and the digestive tract especially in stomach, cecum and sigmoidal colon (at protein level). Expressed in thyroid.

The protein localises to the apical cell membrane. It is found in the cell junction. The enzyme catalyses NADH + O2 + H(+) = H2O2 + NAD(+). It carries out the reaction NADPH + O2 + H(+) = H2O2 + NADP(+). It functions in the pathway hormone biosynthesis; thyroid hormone biosynthesis. The NADPH oxidase activity is calcium-dependent. Peroxidase activity is inhibited by aminobenzohydrazide. Its function is as follows. Generates hydrogen peroxide which is required for the activity of thyroid peroxidase/TPO and lactoperoxidase/LPO. Plays a role in thyroid hormones synthesis and lactoperoxidase-mediated antimicrobial defense at the surface of mucosa. May have its own peroxidase activity through its N-terminal peroxidase-like domain. The polypeptide is Dual oxidase 2 (DUOX2) (Sus scrofa (Pig)).